We begin with the raw amino-acid sequence, 198 residues long: Probable thymidylate kinase (198 aa).

7–14 (GIDGAGKS) lines the ATP pocket.

It belongs to the thymidylate kinase family.

The enzyme catalyses dTMP + ATP = dTDP + ADP. The sequence is that of Probable thymidylate kinase from Methanocorpusculum labreanum (strain ATCC 43576 / DSM 4855 / Z).